The chain runs to 332 residues: MAKEPMRVLVTGAAGQIGYALVPMIARGVMLGADQPVILHMLDIPPAAEALNGVKMELVDAAFPLLKGVVATTDVVEACTGVNVAVMVGGFPRKEGMERKDVMSKNVSIYKSQASALEAHAAPNCKVLVVANPANTNALILKEFAPSIPEKNVTCLTRLDHNRALGQISERLNVQVSDVKNVIIWGNHSSSQYPDVNHATVKTSTGEKPVRELVSDDEWLNGEFITTVQQRGAAIIKARKFSSALSAASSACDHIRDWVLGTPEGTFVSMGVYSDGSYGVPSGLIYSFPVTCSGGEWKIVQGLPIDEFSRKKMDATAQELTEEKTLAYSCLE.

Residues glutamine 16–isoleucine 17, aspartate 43, and glycine 90 each bind NAD(+). Residue arginine 99 participates in oxaloacetate binding. Residues glutamine 113 and asparagine 132 each coordinate NAD(+). Oxaloacetate-binding residues include asparagine 132, arginine 163, histidine 188, and serine 243. Catalysis depends on histidine 188, which acts as the Proton acceptor.

It belongs to the LDH/MDH superfamily. MDH type 2 family. Monomer. In terms of tissue distribution, expressed constitutively in roots.

It is found in the cell membrane. It catalyses the reaction (S)-malate + NAD(+) = oxaloacetate + NADH + H(+). Functionally, malate dehydrogenase; catalyzes a reversible NAD-dependent dehydrogenase reaction involved in central metabolism and redox homeostasis. This is Malate dehydrogenase, cytoplasmic from Zea mays (Maize).